A 380-amino-acid polypeptide reads, in one-letter code: Erythronate-4-phosphate dehydrogenase (380 aa).

Residues S45 and T66 each contribute to the substrate site. NAD(+)-binding positions include D146, T174, 205–207 (ASR), and D231. R207 is a catalytic residue. E236 is an active-site residue. H253 serves as the catalytic Proton donor. Residue G256 coordinates NAD(+). Y257 is a binding site for substrate.

It belongs to the D-isomer specific 2-hydroxyacid dehydrogenase family. PdxB subfamily. Homodimer.

The protein resides in the cytoplasm. It carries out the reaction 4-phospho-D-erythronate + NAD(+) = (R)-3-hydroxy-2-oxo-4-phosphooxybutanoate + NADH + H(+). It participates in cofactor biosynthesis; pyridoxine 5'-phosphate biosynthesis; pyridoxine 5'-phosphate from D-erythrose 4-phosphate: step 2/5. Its function is as follows. Catalyzes the oxidation of erythronate-4-phosphate to 3-hydroxy-2-oxo-4-phosphonooxybutanoate. This Pseudomonas putida (strain W619) protein is Erythronate-4-phosphate dehydrogenase.